Reading from the N-terminus, the 362-residue chain is Atypical chemokine receptor 3 (362 aa).

The Extracellular segment spans residues Met1–Lys40. N-linked (GlcNAc...) asparagine glycosylation is found at Asn13, Asn22, and Asn39. Residues Ser41 to Ala61 form a helical membrane-spanning segment. The Cytoplasmic portion of the chain corresponds to Asn62–Cys81. A helical transmembrane segment spans residues Tyr82–Val102. Topologically, residues Ser103–Lys118 are extracellular. Cysteines 117 and 196 form a disulfide. The chain crosses the membrane as a helical span at residues Ile119 to Ser139. Topologically, residues Val140–Arg162 are cytoplasmic. A helical transmembrane segment spans residues Ala163–Leu183. Residues Lys184–Glu213 lie on the Extracellular side of the membrane. Residues Leu214–Leu234 form a helical membrane-spanning segment. Residues Leu235–Lys252 are Cytoplasmic-facing. Residues Ile253–Leu273 traverse the membrane as a helical segment. The Extracellular segment spans residues Leu274–Ala296. The helical transmembrane segment at Leu297–Asn319 threads the bilayer. Over Arg320–Lys362 the chain is Cytoplasmic. Residues Tyr324–Lys362 are C-terminal cytoplasmic tail. 3 positions are modified to phosphoserine: Ser347, Ser350, and Ser355.

It belongs to the G-protein coupled receptor 1 family. Atypical chemokine receptor subfamily. Homodimer. Can form heterodimers with CXCR4; heterodimerization may regulate CXCR4 signaling activity. Interacts with ARRB1 and ARRB2. The Ser/Thr residues in the C-terminal cytoplasmic tail may be phosphorylated. In terms of processing, ubiquitinated at the Lys residues in its C-terminal cytoplasmic tail and is essential for correct trafficking from and to the cell membrane. Deubiquitinated by CXCL12-stimulation in a reversible manner.

The protein resides in the cell membrane. It localises to the early endosome. Its subcellular location is the recycling endosome. Atypical chemokine receptor that controls chemokine levels and localization via high-affinity chemokine binding that is uncoupled from classic ligand-driven signal transduction cascades, resulting instead in chemokine sequestration, degradation, or transcytosis. Also known as interceptor (internalizing receptor) or chemokine-scavenging receptor or chemokine decoy receptor. Acts as a receptor for chemokines CXCL11 and CXCL12/SDF1. Chemokine binding does not activate G-protein-mediated signal transduction but instead induces beta-arrestin recruitment, leading to ligand internalization and activation of MAPK signaling pathway. Required for regulation of CXCR4 protein levels in migrating interneurons, thereby adapting their chemokine responsiveness. In glioma cells, transduces signals via MEK/ERK pathway, mediating resistance to apoptosis. Promotes cell growth and survival. Not involved in cell migration, adhesion or proliferation of normal hematopoietic progenitors but activated by CXCL11 in malignant hemapoietic cells, leading to phosphorylation of ERK1/2 (MAPK3/MAPK1) and enhanced cell adhesion and migration. Plays a regulatory role in CXCR4-mediated activation of cell surface integrins by CXCL12. Required for heart valve development. Regulates axon guidance in the oculomotor system through the regulation of CXCL12 levels. This Canis lupus familiaris (Dog) protein is Atypical chemokine receptor 3 (ACKR3).